Consider the following 297-residue polypeptide: 4-hydroxy-tetrahydrodipicolinate synthase (297 aa).

T46 contacts pyruvate. Y134 functions as the Proton donor/acceptor in the catalytic mechanism. Residue K162 is the Schiff-base intermediate with substrate of the active site. I204 serves as a coordination point for pyruvate.

It belongs to the DapA family. As to quaternary structure, homotetramer; dimer of dimers.

Its subcellular location is the cytoplasm. It catalyses the reaction L-aspartate 4-semialdehyde + pyruvate = (2S,4S)-4-hydroxy-2,3,4,5-tetrahydrodipicolinate + H2O + H(+). It participates in amino-acid biosynthesis; L-lysine biosynthesis via DAP pathway; (S)-tetrahydrodipicolinate from L-aspartate: step 3/4. Catalyzes the condensation of (S)-aspartate-beta-semialdehyde [(S)-ASA] and pyruvate to 4-hydroxy-tetrahydrodipicolinate (HTPA). The polypeptide is 4-hydroxy-tetrahydrodipicolinate synthase (Stenotrophomonas maltophilia (strain R551-3)).